We begin with the raw amino-acid sequence, 448 residues long: Methylenetetrahydrofolate--tRNA-(uracil-5-)-methyltransferase TrmFO (448 aa).

FAD is bound at residue 13-18; the sequence is GAGLAG.

It belongs to the MnmG family. TrmFO subfamily. FAD is required as a cofactor.

Its subcellular location is the cytoplasm. It carries out the reaction uridine(54) in tRNA + (6R)-5,10-methylene-5,6,7,8-tetrahydrofolate + NADH + H(+) = 5-methyluridine(54) in tRNA + (6S)-5,6,7,8-tetrahydrofolate + NAD(+). The enzyme catalyses uridine(54) in tRNA + (6R)-5,10-methylene-5,6,7,8-tetrahydrofolate + NADPH + H(+) = 5-methyluridine(54) in tRNA + (6S)-5,6,7,8-tetrahydrofolate + NADP(+). In terms of biological role, catalyzes the folate-dependent formation of 5-methyl-uridine at position 54 (M-5-U54) in all tRNAs. The sequence is that of Methylenetetrahydrofolate--tRNA-(uracil-5-)-methyltransferase TrmFO from Streptococcus pyogenes serotype M2 (strain MGAS10270).